Here is a 587-residue protein sequence, read N- to C-terminus: Chaperonin CPN60, mitochondrial (587 aa).

Residues 1 to 32 constitute a mitochondrion transit peptide; the sequence is MYRLISSIASKARVARNCTSQIGSRLSSTRNY.

The protein belongs to the chaperonin (HSP60) family.

It is found in the mitochondrion. In terms of biological role, implicated in mitochondrial protein import and macromolecular assembly. May facilitate the correct folding of imported proteins. May also prevent misfolding and promote the refolding and proper assembly of unfolded polypeptides generated under stress conditions in the mitochondrial matrix. The chain is Chaperonin CPN60, mitochondrial from Brassica napus (Rape).